Reading from the N-terminus, the 302-residue chain is Aspartate carbamoyltransferase catalytic subunit (302 aa).

R54 and T55 together coordinate carbamoyl phosphate. K82 provides a ligand contact to L-aspartate. Carbamoyl phosphate contacts are provided by R104, H132, and Q135. L-aspartate-binding residues include R165 and R217. Positions 257 and 258 each coordinate carbamoyl phosphate.

The protein belongs to the aspartate/ornithine carbamoyltransferase superfamily. ATCase family. Heterododecamer (2C3:3R2) of six catalytic PyrB chains organized as two trimers (C3), and six regulatory PyrI chains organized as three dimers (R2).

The enzyme catalyses carbamoyl phosphate + L-aspartate = N-carbamoyl-L-aspartate + phosphate + H(+). The protein operates within pyrimidine metabolism; UMP biosynthesis via de novo pathway; (S)-dihydroorotate from bicarbonate: step 2/3. Catalyzes the condensation of carbamoyl phosphate and aspartate to form carbamoyl aspartate and inorganic phosphate, the committed step in the de novo pyrimidine nucleotide biosynthesis pathway. This Thermus thermophilus (strain ATCC BAA-163 / DSM 7039 / HB27) protein is Aspartate carbamoyltransferase catalytic subunit.